The sequence spans 118 residues: Large ribosomal subunit protein bL19 (118 aa).

The protein belongs to the bacterial ribosomal protein bL19 family.

This protein is located at the 30S-50S ribosomal subunit interface and may play a role in the structure and function of the aminoacyl-tRNA binding site. This is Large ribosomal subunit protein bL19 from Helicobacter pylori (strain G27).